The chain runs to 245 residues: Cysteine-rich secretory protein 3 (245 aa).

The first 20 residues, 1–20 (MTLFPVLLFLVAGLLPSFPA), serve as a signal peptide directing secretion. The SCP domain maps to 43–171 (VNKHNELRRA…VLKYYYVCQY (129 aa)). Disulfide bonds link C191–C198, C194–C203, C207–C240, C216–C234, and C225–C238. In terms of domain architecture, ShKT spans 207-240 (CKYEDLYSNCKSLKLTLTCKHQLVRDSCKASCNC). A glycan (N-linked (GlcNAc...) asparagine) is linked at N239.

The protein belongs to the CRISP family. As to quaternary structure, interacts with A1BG. In terms of tissue distribution, salivary gland, pancreas and prostate &gt; epididymis, ovary, thymus and colon.

Its subcellular location is the secreted. This Homo sapiens (Human) protein is Cysteine-rich secretory protein 3 (CRISP3).